The sequence spans 60 residues: Mastoparan (60 aa).

A signal peptide spans 1–27 (MKDTILILFTAFIALLGFFGMSAEALA). AXPX repeat units lie at residues 27-30 (ADPL), 31-34 (ADPS), 35-38 (AGPN), and 41-44 (ADPE). A propeptide spanning residues 28–45 (DPLADPSAGPNAEADPEA) is cleaved from the precursor. Position 59 is a leucine amide (leucine 59).

Belongs to the MCD family. Mastoparan subfamily. In terms of tissue distribution, expressed by the venom gland.

Its subcellular location is the secreted. The protein localises to the target cell membrane. Mast cell degranulating peptide. Its mast cell degranulation activity may be related to the activation of G-protein coupled receptors in mast cells as well as interaction with other proteins located in cell endosomal membranes in the mast cells. Has a membranolytic activity on human glioblastoma multiforme cells (brain tumor cells) that leads to cell necrosis. The polypeptide is Mastoparan (Vespa orientalis (Oriental hornet)).